A 256-amino-acid polypeptide reads, in one-letter code: tRNA (guanine-N(7)-)-methyltransferase (256 aa).

A disordered region spans residues 17–45 (TCETVPGLPQKKHYRQRAHSNPHSDHDIE). Positions 26 to 36 (QKKHYRQRAHS) are enriched in basic residues. S-adenosyl-L-methionine contacts are provided by residues Gly-74, 97-98 (EI), 132-133 (NA), and Leu-152. Asp-155 is an active-site residue. 230-232 (TEE) is a binding site for S-adenosyl-L-methionine.

The protein belongs to the class I-like SAM-binding methyltransferase superfamily. TrmB family.

Its subcellular location is the nucleus. It carries out the reaction guanosine(46) in tRNA + S-adenosyl-L-methionine = N(7)-methylguanosine(46) in tRNA + S-adenosyl-L-homocysteine. It functions in the pathway tRNA modification; N(7)-methylguanine-tRNA biosynthesis. Functionally, catalyzes the formation of N(7)-methylguanine at position 46 (m7G46) in tRNA. This Caenorhabditis elegans protein is tRNA (guanine-N(7)-)-methyltransferase.